Reading from the N-terminus, the 34-residue chain is Omega-ctenitoxin-Pn2a (34 aa).

3 disulfide bridges follow: C2/C16, C9/C26, and C15/C28.

Belongs to the neurotoxin 02 (plectoxin) family. 01 (Tx3) subfamily. In terms of tissue distribution, expressed by the venom gland.

The protein localises to the secreted. Its function is as follows. Inhibits all known high-voltage activated calcium channels (L-, P/Q- and R-type currents) (Cav), and most effectively the P/Q- (Cav2.1/CACNA1A) and R-type (Cav2.3/CACNA1E) currents. In rat brain, inhibits glutamate release, neuronal death and loss of neurotransmission in the hippocampus resulting from ischemia. In vivo, induces rapid general flaccid paralysis followed by death in 10-30 minutes at dose levels of 5 ug per mouse. The chain is Omega-ctenitoxin-Pn2a from Phoneutria nigriventer (Brazilian armed spider).